The primary structure comprises 360 residues: DNA replication and repair protein RecF (360 aa).

Glycine 30 to threonine 37 is a binding site for ATP.

The protein belongs to the RecF family.

The protein resides in the cytoplasm. Its function is as follows. The RecF protein is involved in DNA metabolism; it is required for DNA replication and normal SOS inducibility. RecF binds preferentially to single-stranded, linear DNA. It also seems to bind ATP. The polypeptide is DNA replication and repair protein RecF (Thioalkalivibrio sulfidiphilus (strain HL-EbGR7)).